A 53-amino-acid polypeptide reads, in one-letter code: Rubredoxin (53 aa).

In terms of domain architecture, Rubredoxin-like spans 1-52; it reads MAKWRCKICGYIYDEDEGDPDNGISPGTKFEDLPDDWVCPLCGAPKSEFERI. The Fe cation site is built by Cys-6, Cys-9, Cys-39, and Cys-42.

The protein belongs to the rubredoxin family. Fe(3+) is required as a cofactor.

In terms of biological role, rubredoxin is a small nonheme, iron protein lacking acid-labile sulfide. Its single Fe, chelated to 4 Cys, functions as an electron acceptor and may also stabilize the conformation of the molecule. The protein is Rubredoxin (rub) of Pyrococcus abyssi (strain GE5 / Orsay).